The primary structure comprises 54 residues: uncharacterized protein (54 aa).

The chain crosses the membrane as a helical span at residues 32–52 (LFSLLVLIILCFIDPILFYFI).

The protein localises to the host membrane. This is an uncharacterized protein from Cassava vein mosaic virus (CsVMV).